The following is a 701-amino-acid chain: Elongation factor G (701 aa).

One can recognise a tr-type G domain in the interval 10-286 (NKVRNIGIMA…AVIDYLPSPL (277 aa)). Residues 19-26 (AHIDAGKT), 83-87 (DTPGH), and 137-140 (NKMD) each bind GTP.

The protein belongs to the TRAFAC class translation factor GTPase superfamily. Classic translation factor GTPase family. EF-G/EF-2 subfamily.

Its subcellular location is the cytoplasm. Its function is as follows. Catalyzes the GTP-dependent ribosomal translocation step during translation elongation. During this step, the ribosome changes from the pre-translocational (PRE) to the post-translocational (POST) state as the newly formed A-site-bound peptidyl-tRNA and P-site-bound deacylated tRNA move to the P and E sites, respectively. Catalyzes the coordinated movement of the two tRNA molecules, the mRNA and conformational changes in the ribosome. The chain is Elongation factor G from Mycobacteroides abscessus (strain ATCC 19977 / DSM 44196 / CCUG 20993 / CIP 104536 / JCM 13569 / NCTC 13031 / TMC 1543 / L948) (Mycobacterium abscessus).